Here is a 248-residue protein sequence, read N- to C-terminus: Octanoyltransferase (248 aa).

Positions 53–234 (ADTVDEIWIV…RLIANLDGES (182 aa)) constitute a BPL/LPL catalytic domain. Substrate is bound by residues 93–100 (RGGQITYH), 165–167 (ALG), and 178–180 (GLS). The active-site Acyl-thioester intermediate is Cys196.

It belongs to the LipB family.

The protein resides in the cytoplasm. It catalyses the reaction octanoyl-[ACP] + L-lysyl-[protein] = N(6)-octanoyl-L-lysyl-[protein] + holo-[ACP] + H(+). Its pathway is protein modification; protein lipoylation via endogenous pathway; protein N(6)-(lipoyl)lysine from octanoyl-[acyl-carrier-protein]: step 1/2. Catalyzes the transfer of endogenously produced octanoic acid from octanoyl-acyl-carrier-protein onto the lipoyl domains of lipoate-dependent enzymes. Lipoyl-ACP can also act as a substrate although octanoyl-ACP is likely to be the physiological substrate. This chain is Octanoyltransferase, found in Burkholderia multivorans (strain ATCC 17616 / 249).